Here is a 1721-residue protein sequence, read N- to C-terminus: Intersectin-1 (1721 aa).

One can recognise an EH 1 domain in the interval Glu-21 to Ile-109. The 36-residue stretch at Leu-53–Lys-88 folds into the EF-hand 1 domain. Ca(2+)-binding residues include Asp-66, Asn-68, Asp-70, Arg-72, and Glu-77. Position 203 is a phosphoserine (Ser-203). Residues Ser-221–Arg-310 enclose the EH 2 domain. Positions Leu-254 to Ala-289 constitute an EF-hand 2 domain. Ca(2+) is bound by residues Asp-267, Asp-269, Asp-271, Lys-273, and Glu-278. Ser-318 is modified (phosphoserine). Disordered stretches follow at residues Ser-322–Val-348 and Gln-650–Ala-701. The interval Asp-326–Gln-702 is KLERQ. A coiled-coil region spans residues Arg-355–Gln-659. Ser-687 is subject to Phosphoserine. The SH3 1 domain occupies Val-740–Glu-806. Residues Leu-836–Asp-868 are disordered. Over residues Val-838–Asn-862 the composition is skewed to polar residues. The residue at position 897 (Thr-897) is a Phosphothreonine. 3 positions are modified to phosphoserine: Ser-901, Ser-902, and Ser-904. The SH3 2 domain occupies Val-913–Gly-971. Phosphoserine occurs at positions 978, 986, and 995. 2 SH3 domains span residues Val-1002–Ser-1060 and Lys-1074–Pro-1138. The interval Lys-1074–Pro-1138 is required for interaction with FCHSD2. Residues Arg-1104–Trp-1127 carry the Bipartite nuclear localization signal; in isoform 2 motif. At Ser-1137 the chain carries Phosphoserine. Position 1144 is a phosphothreonine (Thr-1144). Residues Ala-1155 to Asp-1214 form the SH3 5 domain. One can recognise a DH domain in the interval Lys-1237 to Gly-1423. The PH domain occupies Lys-1462–Glu-1571. The C2 domain occupies Lys-1579 to Val-1695. Position 1645 is a phosphoserine (Ser-1645). 3 residues coordinate Ca(2+): Asp-1667, Ser-1670, and Asp-1673.

Interacts (via DH domain) with CDC42. Interacts (via SH3 domain 1) with WASL. Interacts with dynamin, SNAP25 and SNAP23. Interacts with clathrin-associated proteins and other components of the endocytic machinery, such as SPIN90, EPS15, EPN1, EPN2, STON2, FCHO1, FCHO2 and DAB2. Interacts (via SH3 domains) with REPS1 and SGIP1. Interacts with ARHGAP31. Interacts with ADAM15. Interacts with PRRT2. Interacts (via SH3 domain 4) with FCHSD2 (via SH3 domain 2). Interacts (via SH3 domain 1) with DENND2B. Interacts (via SH3 domains) with CBL. Isoform 2: Interacts with CBL and DNM1. Isoform 2: Interacts with LMNA. Isoform 2: Interacts with importin subunit KPNA1; this is likely to mediate its import into the nucleus. Interacts with DNM2. In terms of assembly, (Microbial infection) Interacts with vaccinia virus protein A36. The cofactor is Ca(2+). As to expression, isoform 1 is expressed almost exclusively in the brain. Isoform 2 is detected in brain, spleen, lung, liver, heart, skeletal muscle and kidney. Isoform 5 is primarily expressed in brain, spleen, lung and kidney (at protein level). Isoform 1 and isoform 2 are detected in brain. Isoform 2 is ubiquitous in adult and fetal tissues with high expression in skeletal muscle, heart, spleen, ovary, testis and all fetal tissues tested and low expression in thymus, blood, lung, liver and pancreas. Isoform 1 is expressed almost exclusively in the brain, in all brain regions. Not expressed in the spinal cord.

Its subcellular location is the endomembrane system. It is found in the synapse. It localises to the synaptosome. The protein resides in the cell projection. The protein localises to the lamellipodium. Its subcellular location is the cell membrane. It is found in the membrane. It localises to the clathrin-coated pit. The protein resides in the recycling endosome. The protein localises to the endosome. Its subcellular location is the cytoplasmic vesicle. It is found in the cytoplasm. It localises to the nucleus envelope. In terms of biological role, adapter protein that provides a link between the endocytic membrane traffic and the actin assembly machinery. Acts as a guanine nucleotide exchange factor (GEF) for CDC42, and thereby stimulates actin nucleation mediated by WASL and the ARP2/3 complex. Plays a role in the assembly and maturation of clathrin-coated vesicles. Recruits FCHSD2 to clathrin-coated pits. Involved in endocytosis of activated EGFR, and probably also other growth factor receptors. Involved in endocytosis of integrin beta-1 (ITGB1) and transferrin receptor (TFR); internalization of ITGB1 as DAB2-dependent cargo but not TFR may involve association with DAB2. Promotes ubiquitination and subsequent degradation of EGFR, and thereby contributes to the down-regulation of EGFR-dependent signaling pathways. In chromaffin cells, required for normal exocytosis of catecholamines. Required for rapid replenishment of release-ready synaptic vesicles at presynaptic active zones. Inhibits ARHGAP31 activity toward RAC1. Functionally, plays a role in synaptic vesicle endocytosis in brain neurons. The polypeptide is Intersectin-1 (Homo sapiens (Human)).